A 138-amino-acid polypeptide reads, in one-letter code: Putative pre-16S rRNA nuclease (138 aa).

The protein belongs to the YqgF nuclease family.

Its subcellular location is the cytoplasm. Could be a nuclease involved in processing of the 5'-end of pre-16S rRNA. This is Putative pre-16S rRNA nuclease (yrrK) from Bacillus subtilis (strain 168).